A 309-amino-acid chain; its full sequence is Prepilin leader peptidase/N-methyltransferase (309 aa).

The helical transmembrane segment at 35 to 55 (MQLAFAIVLGLVVGSFLNVVV) threads the bilayer. Residues Cys96, Cys99, Cys121, and Cys124 each contribute to the Zn(2+) site. A run of 6 helical transmembrane segments spans residues 147 to 167 (LALF…AALL), 183 to 203 (LTLP…FASL), 207 to 227 (VIGA…FKLL), 230 to 250 (IEGI…WLGW), 253 to 273 (LPQV…VATW), and 288 to 308 (FLAA…LLLG).

It belongs to the peptidase A24 family. Zn(2+) serves as cofactor.

It localises to the cell inner membrane. It carries out the reaction Typically cleaves a -Gly-|-Phe- bond to release an N-terminal, basic peptide of 5-8 residues from type IV prepilin, and then N-methylates the new N-terminal amino group, the methyl donor being S-adenosyl-L-methionine.. Plays an essential role in type IV pili and type II pseudopili formation by proteolytically removing the leader sequence from substrate proteins and subsequently monomethylating the alpha-amino group of the newly exposed N-terminal phenylalanine. This Burkholderia pseudomallei (strain 1026b) protein is Prepilin leader peptidase/N-methyltransferase (gspO).